The chain runs to 638 residues: 1-deoxy-D-xylulose-5-phosphate synthase (638 aa).

Residues histidine 75 and 116 to 118 (AHS) contribute to the thiamine diphosphate site. Aspartate 147 is a Mg(2+) binding site. Thiamine diphosphate is bound by residues 148–149 (GA), asparagine 177, tyrosine 288, and glutamate 370. Asparagine 177 is a binding site for Mg(2+).

Belongs to the transketolase family. DXPS subfamily. As to quaternary structure, homodimer. Mg(2+) serves as cofactor. The cofactor is thiamine diphosphate.

It catalyses the reaction D-glyceraldehyde 3-phosphate + pyruvate + H(+) = 1-deoxy-D-xylulose 5-phosphate + CO2. It functions in the pathway metabolic intermediate biosynthesis; 1-deoxy-D-xylulose 5-phosphate biosynthesis; 1-deoxy-D-xylulose 5-phosphate from D-glyceraldehyde 3-phosphate and pyruvate: step 1/1. Its function is as follows. Catalyzes the acyloin condensation reaction between C atoms 2 and 3 of pyruvate and glyceraldehyde 3-phosphate to yield 1-deoxy-D-xylulose-5-phosphate (DXP). In Cupriavidus necator (strain ATCC 17699 / DSM 428 / KCTC 22496 / NCIMB 10442 / H16 / Stanier 337) (Ralstonia eutropha), this protein is 1-deoxy-D-xylulose-5-phosphate synthase.